We begin with the raw amino-acid sequence, 292 residues long: Nitrogenase iron protein 1 (292 aa).

12-19 is an ATP binding site; that stretch reads GKGGIGKS. Residue C101 participates in [4Fe-4S] cluster binding. R104 is subject to ADP-ribosylarginine; by dinitrogenase reductase ADP-ribosyltransferase. C135 contributes to the [4Fe-4S] cluster binding site.

Belongs to the NifH/BchL/ChlL family. Homodimer. The cofactor is [4Fe-4S] cluster. The reversible ADP-ribosylation of Arg-104 inactivates the nitrogenase reductase and regulates nitrogenase activity.

It carries out the reaction N2 + 8 reduced [2Fe-2S]-[ferredoxin] + 16 ATP + 16 H2O = H2 + 8 oxidized [2Fe-2S]-[ferredoxin] + 2 NH4(+) + 16 ADP + 16 phosphate + 6 H(+). In terms of biological role, the key enzymatic reactions in nitrogen fixation are catalyzed by the nitrogenase complex, which has 2 components: the iron protein and the molybdenum-iron protein. The polypeptide is Nitrogenase iron protein 1 (nifH1) (Paenibacillus durus (Paenibacillus azotofixans)).